Here is a 504-residue protein sequence, read N- to C-terminus: 2,3-bisphosphoglycerate-independent phosphoglycerate mutase (504 aa).

Aspartate 11 and serine 61 together coordinate Mn(2+). Serine 61 functions as the Phosphoserine intermediate in the catalytic mechanism. Residues histidine 122, 152–153, arginine 183, arginine 189, 255–258, and lysine 329 each bind substrate; these read RD and RNDR. Aspartate 396, histidine 400, aspartate 437, histidine 438, and histidine 455 together coordinate Mn(2+).

This sequence belongs to the BPG-independent phosphoglycerate mutase family. Monomer. Mn(2+) serves as cofactor.

The catalysed reaction is (2R)-2-phosphoglycerate = (2R)-3-phosphoglycerate. Its pathway is carbohydrate degradation; glycolysis; pyruvate from D-glyceraldehyde 3-phosphate: step 3/5. Functionally, catalyzes the interconversion of 2-phosphoglycerate and 3-phosphoglycerate. The polypeptide is 2,3-bisphosphoglycerate-independent phosphoglycerate mutase (Bacteroides fragilis (strain YCH46)).